We begin with the raw amino-acid sequence, 210 residues long: Large ribosomal subunit protein uL3 (210 aa).

A disordered region spans residues 136 to 156 (THGTEKAHRSGGSIGNNTEPG).

It belongs to the universal ribosomal protein uL3 family. As to quaternary structure, part of the 50S ribosomal subunit. Forms a cluster with proteins L14 and L19.

Functionally, one of the primary rRNA binding proteins, it binds directly near the 3'-end of the 23S rRNA, where it nucleates assembly of the 50S subunit. In Solidesulfovibrio magneticus (strain ATCC 700980 / DSM 13731 / RS-1) (Desulfovibrio magneticus), this protein is Large ribosomal subunit protein uL3.